An 842-amino-acid chain; its full sequence is Glucans biosynthesis glucosyltransferase H (842 aa).

Helical transmembrane passes span 141–161 (LLLLTLAQTVVATWYMKTILP), 194–214 (ILLLFAVLFCWVSAGFWTALM), 513–533 (VFLTGVMSYLSAPLWFMFLAL), 570–590 (LFASTMILLFLPKLLSIILIW), 615–635 (VLLAPVRMLFHTVFVVSAFLG), and 680–700 (FLFWLAPIVFSLILSPFVSVI).

This sequence belongs to the glycosyltransferase 2 family. OpgH subfamily.

Its subcellular location is the cell inner membrane. It participates in glycan metabolism; osmoregulated periplasmic glucan (OPG) biosynthesis. Functionally, involved in the biosynthesis of osmoregulated periplasmic glucans (OPGs). The polypeptide is Glucans biosynthesis glucosyltransferase H (Enterobacter sp. (strain 638)).